The following is a 366-amino-acid chain: Aminomethyltransferase (366 aa).

It belongs to the GcvT family. As to quaternary structure, the glycine cleavage system is composed of four proteins: P, T, L and H.

The enzyme catalyses N(6)-[(R)-S(8)-aminomethyldihydrolipoyl]-L-lysyl-[protein] + (6S)-5,6,7,8-tetrahydrofolate = N(6)-[(R)-dihydrolipoyl]-L-lysyl-[protein] + (6R)-5,10-methylene-5,6,7,8-tetrahydrofolate + NH4(+). In terms of biological role, the glycine cleavage system catalyzes the degradation of glycine. This is Aminomethyltransferase from Bacillus cereus (strain ZK / E33L).